The following is a 459-amino-acid chain: Cysteine--tRNA ligase (459 aa).

Cys29 contacts Zn(2+). Residues 31-41 carry the 'HIGH' region motif; the sequence is VTTYDYCHIGH. Zn(2+)-binding residues include Cys210, His235, and Glu239. The 'KMSKS' region motif lies at 267-271; sequence KMSKS. Lys270 serves as a coordination point for ATP.

The protein belongs to the class-I aminoacyl-tRNA synthetase family. Monomer. Zn(2+) serves as cofactor.

Its subcellular location is the cytoplasm. The enzyme catalyses tRNA(Cys) + L-cysteine + ATP = L-cysteinyl-tRNA(Cys) + AMP + diphosphate. This Idiomarina loihiensis (strain ATCC BAA-735 / DSM 15497 / L2-TR) protein is Cysteine--tRNA ligase.